The sequence spans 360 residues: MKPSIYGLTRDELIAWAIDNGQKAFRATQIWDWLYRKRIQSFDEMTNISKEFLAILKDSFCINPLKQRVAQESADGTVKYLFELPDGMLIETVLMRQHYGQSVCVTTQVGCNIGCTFCASGLIKKQRDLNSGEITAQIMMVQNYFDQRGQDERVSHVVVMGIGEPFDNYQNVMTFLRTINDDHGLAIGARHITVSTSGLAHKIREFANEGVQVNLAVSLHAPNNELRSSIMRINRSFPLDKLFSAIEYYIETTNRRVTFEYIMLNKVNDGVEQAQELADLTKRIRKLSYVNLIPYNPVSEHDQYSRSPKERVAAFYDILKKNGVNCVVRQEHGTDIDAACGQLRSNTMKKDRQKAAAART.

The Proton acceptor role is filled by E91. The Radical SAM core domain occupies 97–335 (QHYGQSVCVT…CVVRQEHGTD (239 aa)). C104 and C340 are joined by a disulfide. 3 residues coordinate [4Fe-4S] cluster: C111, C115, and C118. Residues 163 to 164 (GE), S195, 218 to 220 (SLH), and N296 contribute to the S-adenosyl-L-methionine site. C340 acts as the S-methylcysteine intermediate in catalysis.

This sequence belongs to the radical SAM superfamily. RlmN family. It depends on [4Fe-4S] cluster as a cofactor.

It localises to the cytoplasm. It catalyses the reaction adenosine(2503) in 23S rRNA + 2 reduced [2Fe-2S]-[ferredoxin] + 2 S-adenosyl-L-methionine = 2-methyladenosine(2503) in 23S rRNA + 5'-deoxyadenosine + L-methionine + 2 oxidized [2Fe-2S]-[ferredoxin] + S-adenosyl-L-homocysteine. The enzyme catalyses adenosine(37) in tRNA + 2 reduced [2Fe-2S]-[ferredoxin] + 2 S-adenosyl-L-methionine = 2-methyladenosine(37) in tRNA + 5'-deoxyadenosine + L-methionine + 2 oxidized [2Fe-2S]-[ferredoxin] + S-adenosyl-L-homocysteine. Functionally, specifically methylates position 2 of adenine 2503 in 23S rRNA and position 2 of adenine 37 in tRNAs. This is Probable dual-specificity RNA methyltransferase RlmN from Streptococcus equi subsp. zooepidemicus (strain MGCS10565).